Reading from the N-terminus, the 241-residue chain is tRNA (guanine-N(7)-)-methyltransferase (241 aa).

S-adenosyl-L-methionine contacts are provided by Glu71, Glu96, Asp123, and Asp146. Asp146 is a catalytic residue. Residues Lys150, Asp182, and 219–222 (TKFE) contribute to the substrate site.

Belongs to the class I-like SAM-binding methyltransferase superfamily. TrmB family.

The enzyme catalyses guanosine(46) in tRNA + S-adenosyl-L-methionine = N(7)-methylguanosine(46) in tRNA + S-adenosyl-L-homocysteine. Its pathway is tRNA modification; N(7)-methylguanine-tRNA biosynthesis. Functionally, catalyzes the formation of N(7)-methylguanine at position 46 (m7G46) in tRNA. This is tRNA (guanine-N(7)-)-methyltransferase from Pseudoalteromonas translucida (strain TAC 125).